A 188-amino-acid chain; its full sequence is Small ribosomal subunit protein eS8 (188 aa).

Positions 1–34 are disordered; it reads MGISRDSRHKRRLTGGRYPVHKKKRKYELGRPSS. Residues 7-26 are compositionally biased toward basic residues; the sequence is SRHKRRLTGGRYPVHKKKRK.

Belongs to the eukaryotic ribosomal protein eS8 family.

This chain is Small ribosomal subunit protein eS8 (RPS8), found in Theileria parva (East coast fever infection agent).